Reading from the N-terminus, the 658-residue chain is Exoribonuclease 2 (658 aa).

Positions 189 to 531 (REDLTALHFI…NHRLIKAVLT (343 aa)) constitute an RNB domain. An S1 motif domain is found at 576 to 658 (KPTFQAEIQD…ETRSIVGTLC (83 aa)).

Belongs to the RNR ribonuclease family. RNase II subfamily.

The protein resides in the cytoplasm. It carries out the reaction Exonucleolytic cleavage in the 3'- to 5'-direction to yield nucleoside 5'-phosphates.. Its function is as follows. Involved in mRNA degradation. Hydrolyzes single-stranded polyribonucleotides processively in the 3' to 5' direction. The chain is Exoribonuclease 2 from Pasteurella multocida (strain Pm70).